The sequence spans 468 residues: 3-isopropylmalate dehydratase large subunit (468 aa).

Residues C346, C406, and C409 each coordinate [4Fe-4S] cluster.

It belongs to the aconitase/IPM isomerase family. LeuC type 1 subfamily. Heterodimer of LeuC and LeuD. [4Fe-4S] cluster serves as cofactor.

The catalysed reaction is (2R,3S)-3-isopropylmalate = (2S)-2-isopropylmalate. The protein operates within amino-acid biosynthesis; L-leucine biosynthesis; L-leucine from 3-methyl-2-oxobutanoate: step 2/4. Its function is as follows. Catalyzes the isomerization between 2-isopropylmalate and 3-isopropylmalate, via the formation of 2-isopropylmaleate. The chain is 3-isopropylmalate dehydratase large subunit from Cyanothece sp. (strain PCC 7425 / ATCC 29141).